Consider the following 190-residue polypeptide: FMRFamide-related peptides (190 aa).

An N-terminal signal peptide occupies residues 1–21 (MSCSRTVALLAALWLVVGATS). A propeptide spanning residues 22 to 33 (SPVRRSPDLEAR) is cleaved from the precursor. Residue phenylalanine 45 is modified to Phenylalanine amide. A propeptide spanning residues 69 to 104 (GNSFLRFGRSQPLTLSTDDLVSLLRAYEEDYDTPMT) is cleaved from the precursor. Phenylalanine 113 carries the phenylalanine amide modification. A propeptide spanning residues 116–150 (DPNFIRLGRSADDDKSAFEQNSELVVSGYPQRKSR) is cleaved from the precursor. Leucine 158 bears the Leucine amide mark. The propeptide occupies 160-190 (RDSEEVNENEFEETEESRRKRSADSCHDCQS). Residues 161-190 (DSEEVNENEFEETEESRRKRSADSCHDCQS) are disordered. A compositionally biased stretch (acidic residues) spans 164–174 (EVNENEFEETE). The segment covering 175 to 190 (ESRRKRSADSCHDCQS) has biased composition (basic and acidic residues).

It belongs to the FARP (FMRFamide related peptide) family. As to expression, RFamide 1: Expressed in corpora cardiaca (CC), corpora allata (CA), antennal lobe (AL) and gnathal ganglion (GNG) (at protein level). Expression in AL detected in most animals, in CC, CA and in GNG in some animals (at protein level). RFamide precursor-related peptide 2: Expressed in corpora cardiaca (CC), corpora allata (CA), antennal lobe (AL) and gnathal ganglion (GNG) (at protein level). Expression in AL detected in some animals, expression in CC, CA and GNG in few animals (at protein level). RFamide 3: Expressed in corpora cardiaca (CC), corpora allata (CA), antennal lobe (AL) and gnathal ganglion (GNG) (at protein level). Expression in AL detected in all animals, in CC, CA and GNG in most animals (at protein level). RFamide 5: Expressed in corpora cardiaca (CC), corpora allata (CA), antennal lobe (AL) and gnathal ganglion (GNG) (at protein level). Expression in AL detected in all animals, in CC, CA and in GNG in some animals (at protein level).

It is found in the secreted. Its function is as follows. In insects, FMRFamide and related peptides have modulatory actions at skeletal neuromuscular junctions, and peptides that are immunologically related to FMRFamide are released into the circulation from neurohemal organs. The protein is FMRFamide-related peptides of Agrotis ipsilon (Black cutworm moth).